We begin with the raw amino-acid sequence, 501 residues long: MEFSVKSGSPEKQRSACIVVGVFEPRRLTSVAEQLDEISGGYLSNLLRRGDLEGKPGQMLLLHHVPNVLSERVLLVGCGKERELDERQYKQIISKTIKTLNETGSMEAVCFLSELHVKGRDTYWRVRQAVEATQDSLYTFLQLKTKKGEPRRPLRKMVFNVPTRRELTIGERAVEHGLAVSLGSKTTRDVANMPPNICNPMYLFEQAKALEAEYENLHVDSVNEKQMDALGMHSYLAVGRGSVNESIMTIMEHKGGPADQAPIVLVGKGLTFDSGGISIKPGEAMDEMKYDMGGAAGVLGAMHTISALNLPINVVGILAGCENMPDANAYRPGDILTTMSGQTVEVLNTDAEGRLVLCDALTYVERFDPELVIDVATLTGACVIALGHHATGVFSNHNPLAHELVNASEQSGDKAWRMPLWDEYQDQLESPFADMTNLGGRPAGSITAACFLSRFTRKYNWAHMDIAGTAWVGGKEKGSTGRPVPMLSQFLMNRAGIESED.

Residues Lys268 and Asp273 each contribute to the Mn(2+) site. Lys280 is an active-site residue. 3 residues coordinate Mn(2+): Asp291, Asp350, and Glu352. Arg354 is an active-site residue.

The protein belongs to the peptidase M17 family. Requires Mn(2+) as cofactor.

It is found in the cytoplasm. It catalyses the reaction Release of an N-terminal amino acid, Xaa-|-Yaa-, in which Xaa is preferably Leu, but may be other amino acids including Pro although not Arg or Lys, and Yaa may be Pro. Amino acid amides and methyl esters are also readily hydrolyzed, but rates on arylamides are exceedingly low.. The enzyme catalyses Release of an N-terminal amino acid, preferentially leucine, but not glutamic or aspartic acids.. Functionally, presumably involved in the processing and regular turnover of intracellular proteins. Catalyzes the removal of unsubstituted N-terminal amino acids from various peptides. This Pseudoalteromonas atlantica (strain T6c / ATCC BAA-1087) protein is Probable cytosol aminopeptidase.